A 778-amino-acid chain; its full sequence is Kin of IRRE-like protein 3 (778 aa).

The N-terminal stretch at 1–21 (MRPFQLDLLFLCFFLFSQELG) is a signal peptide. Residues 22–535 (LQKRGCCLVL…GLEAESVPMA (514 aa)) are Extracellular-facing. 5 consecutive Ig-like C2-type domains span residues 48–142 (YSFS…ARLT), 147–243 (PDDP…TSVT), 249–330 (PPLV…RTVD), 335–415 (PRMT…VTLT), and 419–515 (PPII…IRLK). Cys69 and Cys127 form a disulfide bridge. Asn167 is a glycosylation site (N-linked (GlcNAc...) asparagine). Residues Cys170 and Cys227 are joined by a disulfide bond. Asn253 is a glycosylation site (N-linked (GlcNAc...) asparagine). Residues Cys271 and Cys314 are joined by a disulfide bond. An N-linked (GlcNAc...) asparagine glycan is attached at Asn324. Cystine bridges form between Cys356–Cys398 and Cys440–Cys499. A glycan (N-linked (GlcNAc...) asparagine) is linked at Asn498. A helical transmembrane segment spans residues 536–556 (VIIGVAVGAGVAFLVLMATIV). The Cytoplasmic segment spans residues 557-778 (AFCCARSQRN…PLQRRMQTHV (222 aa)). Positions 727 to 736 (CDSSVSSSGK) are enriched in polar residues. The tract at residues 727-778 (CDSSVSSSGKQDGYVQFDKASKASASSSHHSQSSSQNSDPSRPLQRRMQTHV) is disordered. Low complexity predominate over residues 748-762 (KASASSSHHSQSSSQ).

This sequence belongs to the immunoglobulin superfamily. In terms of assembly, homodimer; mediates homophilic interactions to promote cell adhesion. Interacts with NPHS1; forms heterodimers with NPHS1. Interacts with NPHS2/podocin (via the C-terminus). Interacts with CASK. Interacts (via extracellular region) with MAP1B. Interacts (via extracellular region) with MYO16. Interacts (via intracellular region) with ATP1B1. Interacts (via intracellular region) with SHMT2. Interacts (via intracellular region) with UFC1. Undergoes proteolysis by a metalloprotease and gives rise to a soluble form. In terms of tissue distribution, expressed mainly in adult brain, bone marrow and stromal cells. Expressed in diverse regions of the brain, including the cortex, hippocampus, striatum, olfactory bulb and cerebellum. In brain, expressed in pontine nucleus neurons (at protein level). In hippocampus, produced in both the dentate granule neurons and the GABAergic neurons, but not the CA3 neurons. Expressed in subpopulations of vomeronasal sensory neurons. Expressed in a subset of neurons in dorsal root ganglia.

The protein resides in the cell membrane. The protein localises to the cell projection. Its subcellular location is the axon. It is found in the dendrite. It localises to the secreted. Its function is as follows. Synaptic adhesion molecule required for the formation of target-specific synapses. Required for formation of target-specific synapses at hippocampal mossy fiber synapses. Required for formation of mossy fiber filopodia, the synaptic structures connecting dentate granule and GABA neurons. Probably acts as a homophilic adhesion molecule that promotes trans-cellular interactions and stabilize mossy fiber filipodia contact and subsequent synapse formation. Required for the coalescence of vomeronasal sensory neuron axons. May be involved in the hematopoietic supportive capacity of stroma cells; the secreted extracellular domain is directly responsible for supporting hematopoietic stem cells. This Mus musculus (Mouse) protein is Kin of IRRE-like protein 3 (Kirrel3).